Reading from the N-terminus, the 160-residue chain is Ureidoglycolate lyase (160 aa).

The protein belongs to the ureidoglycolate lyase family. As to quaternary structure, homodimer. Requires Ni(2+) as cofactor.

It catalyses the reaction (S)-ureidoglycolate = urea + glyoxylate. Its pathway is nitrogen metabolism; (S)-allantoin degradation. Functionally, catalyzes the catabolism of the allantoin degradation intermediate (S)-ureidoglycolate, generating urea and glyoxylate. Involved in the anaerobic utilization of allantoin as sole nitrogen source. Reinforces the induction of genes involved in the degradation of allantoin and glyoxylate by producing glyoxylate. The protein is Ureidoglycolate lyase of Escherichia coli (strain SMS-3-5 / SECEC).